The sequence spans 235 residues: NADH-quinone oxidoreductase subunit C (235 aa).

It belongs to the complex I 30 kDa subunit family. In terms of assembly, NDH-1 is composed of 14 different subunits. Subunits NuoB, C, D, E, F, and G constitute the peripheral sector of the complex.

Its subcellular location is the cell membrane. It catalyses the reaction a quinone + NADH + 5 H(+)(in) = a quinol + NAD(+) + 4 H(+)(out). In terms of biological role, NDH-1 shuttles electrons from NADH, via FMN and iron-sulfur (Fe-S) centers, to quinones in the respiratory chain. The immediate electron acceptor for the enzyme in this species is believed to be a menaquinone. Couples the redox reaction to proton translocation (for every two electrons transferred, four hydrogen ions are translocated across the cytoplasmic membrane), and thus conserves the redox energy in a proton gradient. The protein is NADH-quinone oxidoreductase subunit C of Mycolicibacterium paratuberculosis (strain ATCC BAA-968 / K-10) (Mycobacterium paratuberculosis).